Reading from the N-terminus, the 598-residue chain is MSVPLRFSTPSSSPSASDNESVHDDGPTTELDTFNTTDVPRRVNTTKARQMRPKNTLKVAFSSPNLKGLDNTADSDSQPWLGGYLAGRLEDISGQSRRNYVDPYYEELNAGRRPNKPVWSLNGPLPHVLGNSVVEKISQKNQEARSRANSRVNSRANSRANSSVSLAGMDGSPNWKRKMKSAVFGSRVKLNDEEAQLPRNKSSVSIAEQAASRPKVSFSLQSSRQPSIAEEQPQTQRKSSAITVEHAENAEPETPRNNVSFSRKPSIAEQDSSQDITMPPNEIIAEESLDSGSDTETLYLNYWCKIRHFFREGFAEFLGTLVLVVFGVGSNLQATVTNGAGGSFESLSFAWGFGCMLGVYIAGGISGGHVNPAVTISLAIFRKFPWYKVPIYIFFQIWGAFFGGALAYGYHWSSITEFEGGKDIRTPATGGCLYTNPKPYVTWRNAFFDEFIGTAVLVGCLFAILDDTNSPPTQGMTAFIVGLLIAAIGMALGYQTSFTLNPARDLGPRMFAWWIGYGPHSFHLYHWWWTWGAWGGTIGGGIAGGLIYDLVIFTGPESPLNYPDNGFIDKKVHQITAKFEKEEEVENLEKTDSPIENN.

Low complexity predominate over residues 1 to 19; it reads MSVPLRFSTPSSSPSASDN. Disordered regions lie at residues 1–54, 139–176, and 194–279; these read MSVP…MRPK, QKNQ…PNWK, and EAQL…ITMP. At 1-313 the chain is on the cytoplasmic side; that stretch reads MSVPLRFSTP…CKIRHFFREG (313 aa). Polar residues predominate over residues 30–48; the sequence is ELDTFNTTDVPRRVNTTKA. The segment covering 147 to 165 has biased composition (low complexity); the sequence is RANSRVNSRANSRANSSVS. 2 stretches are compositionally biased toward polar residues: residues 218–242 and 255–276; these read FSLQ…SSAI and PRNN…SQDI. The chain crosses the membrane as a helical span at residues 314–334; sequence FAEFLGTLVLVVFGVGSNLQA. The Extracellular portion of the chain corresponds to 335-346; the sequence is TVTNGAGGSFES. A helical membrane pass occupies residues 347–367; that stretch reads LSFAWGFGCMLGVYIAGGISG. At 368-388 the chain is on the cytoplasmic side; it reads GHVNPAVTISLAIFRKFPWYK. The NPA 1 signature appears at 371-373; it reads NPA. A helical membrane pass occupies residues 389 to 409; sequence VPIYIFFQIWGAFFGGALAYG. Residues 410–444 are Extracellular-facing; it reads YHWSSITEFEGGKDIRTPATGGCLYTNPKPYVTWR. A helical membrane pass occupies residues 445-465; sequence NAFFDEFIGTAVLVGCLFAIL. Residues 466 to 473 are Cytoplasmic-facing; the sequence is DDTNSPPT. Residues 474–494 traverse the membrane as a helical segment; it reads QGMTAFIVGLLIAAIGMALGY. The Extracellular segment spans residues 495 to 532; that stretch reads QTSFTLNPARDLGPRMFAWWIGYGPHSFHLYHWWWTWG. Positions 501-503 match the NPA 2 motif; it reads NPA. The helical transmembrane segment at 533–553 threads the bilayer; sequence AWGGTIGGGIAGGLIYDLVIF. The Cytoplasmic portion of the chain corresponds to 554–598; that stretch reads TGPESPLNYPDNGFIDKKVHQITAKFEKEEEVENLEKTDSPIENN.

This sequence belongs to the MIP/aquaporin (TC 1.A.8) family.

The protein resides in the membrane. This is an uncharacterized protein from Schizosaccharomyces pombe (strain 972 / ATCC 24843) (Fission yeast).